A 93-amino-acid polypeptide reads, in one-letter code: Phosphoribosyl-ATP pyrophosphatase (93 aa).

Belongs to the PRA-PH family.

The protein resides in the cytoplasm. It catalyses the reaction 1-(5-phospho-beta-D-ribosyl)-ATP + H2O = 1-(5-phospho-beta-D-ribosyl)-5'-AMP + diphosphate + H(+). It functions in the pathway amino-acid biosynthesis; L-histidine biosynthesis; L-histidine from 5-phospho-alpha-D-ribose 1-diphosphate: step 2/9. The polypeptide is Phosphoribosyl-ATP pyrophosphatase (Mycolicibacterium vanbaalenii (strain DSM 7251 / JCM 13017 / BCRC 16820 / KCTC 9966 / NRRL B-24157 / PYR-1) (Mycobacterium vanbaalenii)).